An 894-amino-acid chain; its full sequence is Alpha-actinin-2 (894 aa).

Residues 1–254 are actin-binding; sequence MNQIEPGVQY…IMTYVSCFYH (254 aa). Calponin-homology (CH) domains follow at residues 38-142 and 151-257; these read KQQR…LRFA and TSAK…HAFA. Threonine 237 carries the phosphothreonine modification. 4 Spectrin repeats span residues 281–391, 401–506, 516–627, and 637–740; these read RLME…WLLN, HLAE…ALER, QLHL…SLQE, and RLRR…EVET. EF-hand domains lie at 753 to 788 and 789 to 824; these read EQMNEFRASFNHFDRRKNGLMDHEDFRACLISMGYD and LGEAEFARIMTLVDPNGQGTVTFQSFIDFMTRETAD. Ca(2+) contacts are provided by aspartate 766, asparagine 770, aspartate 777, aspartate 802, asparagine 804, and threonine 808.

This sequence belongs to the alpha-actinin family. In terms of assembly, homodimer; antiparallel. Also forms heterodimers with ACTN3. Interacts with ADAM12, MYOZ1, MYOZ2 and MYOZ3. Interacts via its C-terminal region with the LDB3 PDZ domain. Interacts with XIRP2. Interacts with DST isoform 1 (via N-terminus). Interacts with PARVB. Interacts with SYNPO2. Post-translationally, ubiquitinated by FBXL22, leading to proteasomal degradation. As to expression, expressed in both skeletal and cardiac muscle.

It is found in the cytoplasm. The protein resides in the myofibril. It localises to the sarcomere. Its subcellular location is the z line. F-actin cross-linking protein which is thought to anchor actin to a variety of intracellular structures. This is a bundling protein. This is Alpha-actinin-2 (ACTN2) from Homo sapiens (Human).